The sequence spans 334 residues: Protein SCO1 homolog 1, mitochondrial (334 aa).

A mitochondrion-targeting transit peptide spans 1–13 (MASALCRTASRLR). Positions 74–120 (SASDTTSKHDSGKPETKSSEKNEKSGGSESSDGGSDHKNERASGKDV) are disordered. Basic and acidic residues-rich tracts occupy residues 79–99 (TSKH…EKSG) and 107–120 (GSDH…GKDV). Residues 125 to 144 (VSWMSFFLLFATGAGLVYYY) traverse the membrane as a helical segment. In terms of domain architecture, Thioredoxin spans 166-331 (PSAGKAAIGG…TDGVVKEIRQ (166 aa)). Residues Cys-206, Cys-210, and His-295 each contribute to the Cu cation site.

The protein belongs to the SCO1/2 family. As to expression, expressed in the whole plant with highest expression in imbibed seeds, embryos, endosperm, and root tips.

It is found in the mitochondrion inner membrane. In terms of biological role, thought to play a role in cellular copper homeostasis, mitochondrial redox signaling or insertion of copper into the active site of COX. Plays an essential role in embryo development. In Arabidopsis thaliana (Mouse-ear cress), this protein is Protein SCO1 homolog 1, mitochondrial (HCC1).